The chain runs to 153 residues: MKFCKPKPKSILSLDIGSKRIGLAYCDPLCITSNILPAVKRFENNQEIKIIRNYINEFNLTGFIVGIPLDEKGKMTTQAIDCKNYGQLLSNELKLPFSYVNEHSSTWESSERFGIKKDKSGLIDSFSAKIILEQWIEEGPELEEIAGKRQIKD.

It belongs to the YqgF nuclease family.

The protein resides in the cytoplasm. Its function is as follows. Could be a nuclease involved in processing of the 5'-end of pre-16S rRNA. The polypeptide is Putative pre-16S rRNA nuclease (Prochlorococcus marinus (strain MIT 9301)).